A 366-amino-acid polypeptide reads, in one-letter code: Beta sliding clamp (366 aa).

Belongs to the beta sliding clamp family. Forms a ring-shaped head-to-tail homodimer around DNA which binds and tethers DNA polymerases and other proteins to the DNA. The DNA replisome complex has a single clamp-loading complex (3 tau and 1 each of delta, delta', psi and chi subunits) which binds 3 Pol III cores (1 core on the leading strand and 2 on the lagging strand) each with a beta sliding clamp dimer. Additional proteins in the replisome are other copies of gamma, psi and chi, Ssb, DNA helicase and RNA primase.

It is found in the cytoplasm. In terms of biological role, confers DNA tethering and processivity to DNA polymerases and other proteins. Acts as a clamp, forming a ring around DNA (a reaction catalyzed by the clamp-loading complex) which diffuses in an ATP-independent manner freely and bidirectionally along dsDNA. Initially characterized for its ability to contact the catalytic subunit of DNA polymerase III (Pol III), a complex, multichain enzyme responsible for most of the replicative synthesis in bacteria; Pol III exhibits 3'-5' exonuclease proofreading activity. The beta chain is required for initiation of replication as well as for processivity of DNA replication. In Haemophilus influenzae (strain ATCC 51907 / DSM 11121 / KW20 / Rd), this protein is Beta sliding clamp (dnaN).